A 174-amino-acid polypeptide reads, in one-letter code: Crossover junction endodeoxyribonuclease RuvC (174 aa).

Residues D8, E67, and D139 contribute to the active site. D8, E67, and D139 together coordinate Mg(2+).

This sequence belongs to the RuvC family. Homodimer which binds Holliday junction (HJ) DNA. The HJ becomes 2-fold symmetrical on binding to RuvC with unstacked arms; it has a different conformation from HJ DNA in complex with RuvA. In the full resolvosome a probable DNA-RuvA(4)-RuvB(12)-RuvC(2) complex forms which resolves the HJ. Mg(2+) is required as a cofactor.

It localises to the cytoplasm. The enzyme catalyses Endonucleolytic cleavage at a junction such as a reciprocal single-stranded crossover between two homologous DNA duplexes (Holliday junction).. The RuvA-RuvB-RuvC complex processes Holliday junction (HJ) DNA during genetic recombination and DNA repair. Endonuclease that resolves HJ intermediates. Cleaves cruciform DNA by making single-stranded nicks across the HJ at symmetrical positions within the homologous arms, yielding a 5'-phosphate and a 3'-hydroxyl group; requires a central core of homology in the junction. The consensus cleavage sequence is 5'-(A/T)TT(C/G)-3'. Cleavage occurs on the 3'-side of the TT dinucleotide at the point of strand exchange. HJ branch migration catalyzed by RuvA-RuvB allows RuvC to scan DNA until it finds its consensus sequence, where it cleaves and resolves the cruciform DNA. The polypeptide is Crossover junction endodeoxyribonuclease RuvC (Pseudomonas fluorescens (strain SBW25)).